The following is a 201-amino-acid chain: Phosphoheptose isomerase 2 (201 aa).

In terms of domain architecture, SIS spans 39 to 198 (VIKAYKNGNK…EEELFGKGFS (160 aa)). 54 to 56 (NGG) lines the substrate pocket. 2 residues coordinate Zn(2+): histidine 63 and glutamate 67. Residues glutamate 67, 96-97 (ND), 122-124 (STS), serine 127, and glutamine 174 contribute to the substrate site. Zn(2+) is bound by residues glutamine 174 and histidine 182.

This sequence belongs to the SIS family. GmhA subfamily. In terms of assembly, homotetramer. Requires Zn(2+) as cofactor.

It localises to the cytoplasm. The catalysed reaction is 2 D-sedoheptulose 7-phosphate = D-glycero-alpha-D-manno-heptose 7-phosphate + D-glycero-beta-D-manno-heptose 7-phosphate. It functions in the pathway carbohydrate biosynthesis; D-glycero-D-manno-heptose 7-phosphate biosynthesis; D-glycero-alpha-D-manno-heptose 7-phosphate and D-glycero-beta-D-manno-heptose 7-phosphate from sedoheptulose 7-phosphate: step 1/1. Its pathway is capsule biogenesis; capsule polysaccharide biosynthesis. Its function is as follows. Catalyzes the isomerization of sedoheptulose 7-phosphate in D-glycero-D-manno-heptose 7-phosphate. No activity with L-galacto-heptulose, L-galacto-heptulose 7-phosphate or D-manno-heptulose. The sequence is that of Phosphoheptose isomerase 2 from Campylobacter jejuni subsp. jejuni serotype O:2 (strain ATCC 700819 / NCTC 11168).